Reading from the N-terminus, the 710-residue chain is uncharacterized protein (710 aa).

The segment at 1-40 (MSESDGAFKSPSLPPSHHAPAPMSPEKIRAPAEQMDGPVE) is disordered. The span at 15–25 (PSHHAPAPMSP) shows a compositional bias: low complexity. One can recognise an FHA domain in the interval 108 to 165 (VVIGRIKPGCDLLMEHPSISRYHCILQYGNDKMSKTGKGWHIFELGSTHGSRMNKKRL). Coiled coils occupy residues 206–240 (TEMKLRKHKKELEAKLRAAAAQEMIDDEKREKEEE), 409–440 (ETDTYESLCRKLEESKKEIIECQKHLDELSAG), and 471–502 (AKTKMEKSKWRQKLMAATHESQKLEKLVKIAK). The disordered stretch occupies residues 230-250 (IDDEKREKEEEGCGWGMDYGE). Disordered regions lie at residues 535 to 560 (EIDQTPSQGPGPSTSATLPATVAPTS), 591 to 619 (KNSLPAVDEPSSVKDEVSEETPQKEAFGS), and 671 to 710 (EDYGAGVEDRDEKYSTWMPPNADQSEAKQDALRAKFAGRY). Over residues 538–560 (QTPSQGPGPSTSATLPATVAPTS) the composition is skewed to polar residues. Residues 613–661 (QKEAFGSKVQKRVAQWEEELEAEKEELAKKQKLEAEEEAKKKVQRVRRR) adopt a coiled-coil conformation.

This is an uncharacterized protein from Caenorhabditis elegans.